A 968-amino-acid polypeptide reads, in one-letter code: Putative pectinesterase/pectinesterase inhibitor 26 (968 aa).

Residues 33-53 form a helical membrane-spanning segment; that stretch reads IGISVAVLVAIIISSTVTIAI. The pectinesterase inhibitor 26 A stretch occupies residues 71 to 230; it reads LTPAASLKTV…TEFTSNSLAI (160 aa). Asn-101, Asn-158, Asn-219, Asn-295, Asn-352, Asn-400, Asn-464, Asn-541, Asn-559, and Asn-603 each carry an N-linked (GlcNAc...) asparagine glycan. The pectinesterase inhibitor 26 B stretch occupies residues 265 to 430; the sequence is LTPAASLRNV…RKFTSNSLAI (166 aa). The interval 453–614 is pectinesterase inhibitor 26 C; that stretch reads PTPSSVLRTV…TEFTSNSLAI (162 aa). The tract at residues 660-954 is pectinesterase 26; the sequence is HVTVAADGSG…FTVKYFLRGD (295 aa). Substrate is bound at residue Thr-735. Residue Asn-737 is glycosylated (N-linked (GlcNAc...) asparagine). Gln-765 contacts substrate. Asp-788 (proton donor; for pectinesterase activity) is an active-site residue. Residues Cys-802 and Cys-822 are joined by a disulfide bond. The active-site Nucleophile; for pectinesterase activity is the Asp-809. Asn-863 carries N-linked (GlcNAc...) asparagine glycosylation. Substrate is bound by residues Arg-872 and Trp-874. N-linked (GlcNAc...) asparagine glycosylation occurs at Asn-900.

The protein in the N-terminal section; belongs to the PMEI family. This sequence in the C-terminal section; belongs to the pectinesterase family. In terms of tissue distribution, expressed in flowers.

It localises to the membrane. It catalyses the reaction [(1-&gt;4)-alpha-D-galacturonosyl methyl ester](n) + n H2O = [(1-&gt;4)-alpha-D-galacturonosyl](n) + n methanol + n H(+). Its pathway is glycan metabolism; pectin degradation; 2-dehydro-3-deoxy-D-gluconate from pectin: step 1/5. In terms of biological role, acts in the modification of cell walls via demethylesterification of cell wall pectin. This Arabidopsis thaliana (Mouse-ear cress) protein is Putative pectinesterase/pectinesterase inhibitor 26 (PME26).